The primary structure comprises 587 residues: MSGDYEDDLCRRALILVSDLCARVRDADTNDRCQEFNELRIRGYPRGPDADISVSLLSVIVTFCGIVLLGVSLFVSWKLCWVPWRDKGGSAVGGGPLRKDLAPGVGLAGLVGGGGHHLGASLGGHPLLGGPHHHGHTAHHPPFAELLEPGGLGGSEPPEPSYLDMDSYPEAAVASVVAAGVKPSQTSPELPSEGGTGSGLLLLPPSGGGLPSAQSHQQVTSLAPTTRYPALPRPLTQQTLTTQADPSTEERPPALPLPLPGGEEKAKLIGQIKPELYQGTGPGGRRGGGSGEAGAPCGRISFALRYLYGSDHLVVRILQALDLPAKDSNGFSDPYVKIYLLPDRKKKFQTKVHRKTLNPIFNETFQFSVPLAELAQRKLHFSVYDFDRFSRHDLIGQVVLDNLLELAEQPPDRPLWRDILEGGSEKADLGELNFSLCYLPTAGRLTVTIIKASNLKAMDLTGFSDPYVKASLISEGRRLKKRKTSIKKNTLNPTYNEALVFDVAPESVENVGLSIAVVDYDCIGHNEVIGVCRVGPEAADPHGREHWAEMLANPRKPVEHWHQLVEEKTLSSFTKGGKGLSEKENSE.

The Vesicular portion of the chain corresponds to 1 to 54; that stretch reads MSGDYEDDLCRRALILVSDLCARVRDADTNDRCQEFNELRIRGYPRGPDADISV. A cysteine motif region spans residues 10–34; that stretch reads CRRALILVSDLCARVRDADTNDRCQ. A helical membrane pass occupies residues 55–75; sequence SLLSVIVTFCGIVLLGVSLFV. Topologically, residues 76–587 are cytoplasmic; it reads SWKLCWVPWR…KGLSEKENSE (512 aa). Residues 183-205 show a composition bias toward low complexity; sequence PSQTSPELPSEGGTGSGLLLLPP. The tract at residues 183 to 258 is disordered; that stretch reads PSQTSPELPS…EERPPALPLP (76 aa). A compositionally biased stretch (polar residues) spans 213 to 224; sequence AQSHQQVTSLAP. Low complexity predominate over residues 229–244; it reads PALPRPLTQQTLTTQA. Residue Arg-286 is modified to Omega-N-methylarginine. 2 C2 domains span residues 296-417 and 428-562; these read PCGR…PLWR and DLGE…EHWH. The Ca(2+) site is built by Asp-327, Asp-333, Asp-385, Phe-386, Asp-387, Ser-390, Asp-393, Asp-459, Asp-465, Asp-519, and Asp-521.

It belongs to the synaptotagmin family. Homodimer; disulfide-linked via the cysteine motif. Can also form heterodimers with SYT6, SYT9 and SYT10. Requires Ca(2+) as cofactor.

The protein localises to the cell membrane. Its subcellular location is the cytoplasmic vesicle. It localises to the secretory vesicle membrane. Its function is as follows. Ca(2+) sensor involved in Ca(2+)-dependent exocytosis of secretory vesicles through Ca(2+) and phospholipid binding to the C2 domain. Ca(2+) induces binding of the C2-domains to phospholipid membranes and to assembled SNARE-complexes; both actions contribute to triggering exocytosis. Plays a role in dendrite formation by melanocytes. This chain is Synaptotagmin-3 (Syt3), found in Mus musculus (Mouse).